A 146-amino-acid chain; its full sequence is MKLHELQPAAGSRKAPKRVGRGTGSGLGRNAGKGEKGQNARSGGGVRPGFEGGQMPLYRRLPKRGFTNIFAKRYVSINVDRLNIFENGTEITPEVLLERRVVSKVLDGVKILGNGNLEKSLIVKGCKFSKSAIEKIEAAGGKVEVI.

The tract at residues 1-54 is disordered; sequence MKLHELQPAAGSRKAPKRVGRGTGSGLGRNAGKGEKGQNARSGGGVRPGFEGGQ. 2 stretches are compositionally biased toward gly residues: residues 21 to 31 and 42 to 52; these read RGTGSGLGRNA and SGGGVRPGFEG.

It belongs to the universal ribosomal protein uL15 family. As to quaternary structure, part of the 50S ribosomal subunit.

Its function is as follows. Binds to the 23S rRNA. The chain is Large ribosomal subunit protein uL15 from Clostridium botulinum (strain Eklund 17B / Type B).